The sequence spans 155 residues: MKLSTKGRYAMVALVDLALAQKSGNELVSLAEVSKRQDISLPYLEQLFVKLRRAGLVEAVRGPGGGYKLARPAESIRVSEIMEAVEETVNAMHTGAGASGGVSGSRAQSLTNRLWEGLSAHVYVFLHQTRLSDIIKNEMRPCPAVPALFRVVDED.

An HTH rrf2-type domain is found at 2-136 (KLSTKGRYAM…HQTRLSDIIK (135 aa)). The H-T-H motif DNA-binding region spans 30 to 53 (LAEVSKRQDISLPYLEQLFVKLRR). Positions 141 to 145 (PCPAV) are heme regulatory motif (HRM). Position 142 (C142) interacts with [2Fe-2S] cluster.

[2Fe-2S] cluster serves as cofactor.

Regulates the transcription of several operons and genes involved in the biogenesis of Fe-S clusters and Fe-S-containing proteins. Functions as a transcriptional repressor of genes involved in iron metabolism by directly binding to the promoter region of genes preceded by the Iron-Rhodo-box motif. Binds to iscR and hemP promoter regions independently of an Fe-S cluster, but their transcriptional repression is Fe-S cluster-dependent. Seems to activate some target genes in a Fe-S cluster-independent manner. Negatively regulates its own transcription in the presence of iron only. In Cereibacter sphaeroides (strain ATCC 17023 / DSM 158 / JCM 6121 / CCUG 31486 / LMG 2827 / NBRC 12203 / NCIMB 8253 / ATH 2.4.1.) (Rhodobacter sphaeroides), this protein is HTH-type transcriptional regulator IscR.